The sequence spans 24 residues: FLPIIAGVAAKVFPKIFCAISKKC.

Cysteines 18 and 24 form a disulfide.

In terms of tissue distribution, expressed by the skin glands.

The protein resides in the secreted. Antibacterial activity against Gram-positive bacterium S.aureus and Gram-negative bacterium E.coli. Has activity against C.albicans. The sequence is that of Brevinin-1Pa from Lithobates pipiens (Northern leopard frog).